A 231-amino-acid polypeptide reads, in one-letter code: MACRRWWSTAVVFPPVARPPGSAGSHFLGGAGVRGVEIGGNFIKFTAIGVYLEDAAVPALAKKWGGKTADELASDAAFFRDVVTGDFEKFTRVTMILPLTGEQYAEKVTENCVAFWKAAGLYTDAEGVAVEKFREVFKPETFAPGRSILFTHSPAGVLTVAFSKDSSVPAAGGVAIENKRLCEAVLESIIGERGVSPAAKLSLAARVSELLAKETAAAADAPQAEPVSITA.

Residues threonine 46, asparagine 111, and serine 188 each coordinate substrate.

The protein belongs to the chalcone isomerase family. Pericarp.

It carries out the reaction a chalcone = a flavanone.. It functions in the pathway secondary metabolite biosynthesis; flavonoid biosynthesis. In terms of biological role, catalyzes the intramolecular cyclization of bicyclic chalcones into tricyclic (S)-flavanones. Responsible for the isomerization of 4,2',4',6'-tetrahydroxychalcone (also termed chalcone) into naringenin. This Zea mays (Maize) protein is Chalcone--flavanone isomerase (CHI).